Consider the following 382-residue polypeptide: Homeobox protein bagpipe (382 aa).

Disordered regions lie at residues 27 to 66 (NDIL…SKSP), 144 to 178 (TSND…KKRS), and 314 to 382 (QPIP…VEID). Residues 48–62 (EPEKLKPSSDRERSI) show a composition bias toward basic and acidic residues. Low complexity predominate over residues 158–170 (SSPSESPLSHDGS). Residues 175 to 234 (KKRSRAAFSHAQVFELERRFAQQRYLSGPERSEMAKSLRLTETQVKIWFQNRRYKTKRKQ) constitute a DNA-binding region (homeobox). Low complexity predominate over residues 321-335 (QSSSFVTASSASSSP). Acidic residues predominate over residues 373–382 (EDVDENVEID).

Belongs to the NK-3 homeobox family. Is expressed in a segmented pattern in visceral muscle and in a subset of cardiac muscles. Loss of activity results in segmental gaps in midgut visceral muscle.

It is found in the nucleus. Involved in the determination of cell fates in the dorsal mesoderm. The protein is Homeobox protein bagpipe (bap) of Drosophila melanogaster (Fruit fly).